Here is a 35-residue protein sequence, read N- to C-terminus: Photosystem II reaction center protein T (35 aa).

Residues 3–23 (AFAYTLLMTLVVATLFFAVAF) form a helical membrane-spanning segment.

This sequence belongs to the PsbT family. PSII is composed of 1 copy each of membrane proteins PsbA, PsbB, PsbC, PsbD, PsbE, PsbF, PsbH, PsbI, PsbJ, PsbK, PsbL, PsbM, PsbT, PsbX, PsbY, Psb30/Ycf12, peripheral proteins PsbO, CyanoQ (PsbQ), PsbU, PsbV and a large number of cofactors. It forms dimeric complexes.

The protein resides in the cellular thylakoid membrane. Found at the monomer-monomer interface of the photosystem II (PS II) dimer, plays a role in assembly and dimerization of PSII. PSII is a light-driven water plastoquinone oxidoreductase, using light energy to abstract electrons from H(2)O, generating a proton gradient subsequently used for ATP formation. In Prochlorococcus marinus (strain MIT 9303), this protein is Photosystem II reaction center protein T.